The chain runs to 119 residues: Acidic phospholipase A2 DE-III (119 aa).

Cystine bridges form between C11–C72, C26–C118, C28–C44, C43–C99, C50–C92, C60–C85, and C79–C90. Residues Y27, G29, and G31 each coordinate Ca(2+). H47 is a catalytic residue. D48 provides a ligand contact to Ca(2+). The active site involves D93.

Belongs to the phospholipase A2 family. Group I subfamily. D49 sub-subfamily. Ca(2+) is required as a cofactor. As to expression, expressed by the venom gland.

The protein localises to the secreted. The catalysed reaction is a 1,2-diacyl-sn-glycero-3-phosphocholine + H2O = a 1-acyl-sn-glycero-3-phosphocholine + a fatty acid + H(+). Its function is as follows. PLA2 catalyzes the calcium-dependent hydrolysis of the 2-acyl groups in 3-sn-phosphoglycerides. The polypeptide is Acidic phospholipase A2 DE-III (Naja melanoleuca (Forest cobra)).